We begin with the raw amino-acid sequence, 59 residues long: Large ribosomal subunit protein bL32 (59 aa).

Positions 1 to 20 (MAVQQNKKSKSKKGMRRSHD) are disordered. A compositionally biased stretch (basic residues) spans 7–19 (KKSKSKKGMRRSH).

This sequence belongs to the bacterial ribosomal protein bL32 family.

The sequence is that of Large ribosomal subunit protein bL32 from Nitratidesulfovibrio vulgaris (strain DSM 19637 / Miyazaki F) (Desulfovibrio vulgaris).